The primary structure comprises 208 residues: Uracil phosphoribosyltransferase (208 aa).

Residues Arg-78, Arg-103, and 130-138 (DPMLATGGS) contribute to the 5-phospho-alpha-D-ribose 1-diphosphate site. Uracil contacts are provided by residues Ile-193 and 198 to 200 (GDA). Asp-199 contacts 5-phospho-alpha-D-ribose 1-diphosphate.

Belongs to the UPRTase family. It depends on Mg(2+) as a cofactor.

The enzyme catalyses UMP + diphosphate = 5-phospho-alpha-D-ribose 1-diphosphate + uracil. Its pathway is pyrimidine metabolism; UMP biosynthesis via salvage pathway; UMP from uracil: step 1/1. Allosterically activated by GTP. Its function is as follows. Catalyzes the conversion of uracil and 5-phospho-alpha-D-ribose 1-diphosphate (PRPP) to UMP and diphosphate. In Actinobacillus succinogenes (strain ATCC 55618 / DSM 22257 / CCUG 43843 / 130Z), this protein is Uracil phosphoribosyltransferase.